The primary structure comprises 131 residues: Small ribosomal subunit protein uS11 (131 aa).

Belongs to the universal ribosomal protein uS11 family. As to quaternary structure, part of the 30S ribosomal subunit.

Its function is as follows. Located on the platform of the 30S subunit. This Haloquadratum walsbyi (strain DSM 16790 / HBSQ001) protein is Small ribosomal subunit protein uS11.